Here is a 711-residue protein sequence, read N- to C-terminus: MND1-interacting protein 1 (711 aa).

The stretch at 390–648 (EWAQKNAMQA…LEGSYDNEAN (259 aa)) forms a coiled coil. 2 disordered regions span residues 552–571 (EALA…EGHN) and 602–622 (RLKA…WKPK). Positions 602–611 (RLKASSDSDS) are enriched in basic and acidic residues. The RING-type zinc finger occupies 653-697 (CIICMKDEVSVVFLPCAHQVVCGSCSDSFFASNNGGSKVTCPCCR).

In terms of assembly, interacts (via C-terminal domain) with MND1 and HOP2. Interacts with XRI1 (via C-terminal domain).

The protein is MND1-interacting protein 1 (MIP1) of Arabidopsis thaliana (Mouse-ear cress).